Consider the following 707-residue polypeptide: UvrABC system protein C (707 aa).

A GIY-YIG domain is found at 14–94; it reads AEPGCYLMKD…IKKHRPRFNV (81 aa). Residues 206 to 241 enclose the UVR domain; it reads GELVERLRGRMAGAAEGLRFEEAARLRDQLQAVERS. The tract at residues 655–707 is disordered; it reads DAPPIAADEPSGAPAGAPGGGPAEASPEAVAAATEAEIDAALADEDASPEPAA. Low complexity-rich tracts occupy residues 660–670 and 677–689; these read AADEPSGAPAG and AEAS…AATE. Residues 690-707 are compositionally biased toward acidic residues; that stretch reads AEIDAALADEDASPEPAA.

It belongs to the UvrC family. Interacts with UvrB in an incision complex.

The protein resides in the cytoplasm. Its function is as follows. The UvrABC repair system catalyzes the recognition and processing of DNA lesions. UvrC both incises the 5' and 3' sides of the lesion. The N-terminal half is responsible for the 3' incision and the C-terminal half is responsible for the 5' incision. This is UvrABC system protein C from Anaeromyxobacter dehalogenans (strain 2CP-1 / ATCC BAA-258).